Reading from the N-terminus, the 252-residue chain is Type I iodothyronine deiodinase (252 aa).

Over 1–17 (MESLLQTIKLMLRYIQK) the chain is Extracellular. A helical; Signal-anchor for type III membrane protein transmembrane segment spans residues 18-38 (ALILFFLFLYVVVGKVLMFLF). The Cytoplasmic segment spans residues 39-252 (PQTMASVLKS…EVCSVLEKKK (214 aa)). Sec130 is an active-site residue. Sec130 is a non-standard amino acid (selenocysteine).

This sequence belongs to the iodothyronine deiodinase family. Predominantly monomer. Can form homodimers but homodimerization is not essential for enzyme activity.

The protein localises to the cell membrane. The protein resides in the endoplasmic reticulum membrane. It is found in the basolateral cell membrane. It carries out the reaction 3,3',5-triiodo-L-thyronine + iodide + A + H(+) = L-thyroxine + AH2. The catalysed reaction is 3,3',5'-triiodo-L-thyronine + iodide + A + H(+) = L-thyroxine + AH2. The enzyme catalyses 3,3'-diiodo-L-thyronine + iodide + A + H(+) = 3,3',5'-triiodo-L-thyronine + AH2. It catalyses the reaction 3,3'-diiodo-L-thyronine + iodide + A + H(+) = 3,3',5-triiodo-L-thyronine + AH2. It carries out the reaction 3'-iodo-L-thyronine + iodide + A + H(+) = 3',5'-diiodo-L-thyronine + AH2. The catalysed reaction is 3-iodo-L-thyronine + iodide + A + H(+) = 3,5-diiodo-L-thyronine + AH2. The enzyme catalyses 3-iodo-L-thyronine + iodide + A + H(+) = 3,3'-diiodo-L-thyronine + AH2. It catalyses the reaction 3,3'-diiodothyronamine + iodide + A + H(+) = 3,3',5'-triiodothyronamine + AH2. It carries out the reaction 3'-iodothyronamine + iodide + A + H(+) = 3',5'-diiodothyronamine + AH2. The catalysed reaction is 3-iodothyronamine + iodide + A + H(+) = 3,3'-diiodothyronamine + AH2. The enzyme catalyses 3,3'-diiodothyronamine + iodide + A + H(+) = 3,3',5-triiodothyronamine + AH2. It catalyses the reaction 3-iodothyronamine + iodide + A + H(+) = 3,5-diiodothyronamine + AH2. It carries out the reaction 3,3'-diiodo-L-thyronine sulfate + iodide + A + H(+) = 3,3',5'-triiodo-L-thyronine sulfate + AH2. The catalysed reaction is 3,3',5'-triiodo-L-thyronine sulfate + iodide + A + H(+) = L-thyroxine sulfate + AH2. The enzyme catalyses 3,3'-diiodo-L-thyronine sulfate + iodide + A + H(+) = 3,3',5-triiodo-L-thyronine sulfate + AH2. Its activity is regulated as follows. Lacks sensitivity to 6-n-propylthiouracil. Plays a crucial role in the metabolism of thyroid hormones (TH) and has specific roles in TH activation and inactivation by deiodination. Catalyzes the deiodination of L-thyroxine (T4) to 3,5,3'-triiodothyronine (T3) and 3,3',5'-triiodothyronine (rT3) to 3,3'-diiodothyronine (3,3'-T2) via outer-ring deiodination (ORD). Catalyzes the deiodiantion of T4 to rT3 and T3 to 3,3'-T2 via inner-ring deiodination (IRD). Catalyzes the deiodination of 3',5'-diiodothyronine (3',5'-T2) to 3'-monoiodothyronine (3'-T1) via ORD. Catalyzes the deiodination of 3,5-diiodothyronine (3,5-T2) to 3-monoiodothyronine (3-T1) and 3,3'-T2 to 3-T1 via IRD. Catalyzes the phenolic ring deiodinations of 3,3',5'-triiodothyronamine, 3',5'-diiodothyronamine and 3,3'-diiodothyronamine as well as tyrosyl ring deiodinations of 3,5,3'-triiodothyronamine and 3,5-diiodothyronamine. Catalyzes the deiodination of L-thyroxine sulfate and 3,3',5-triiodo-L-thyronine sulfate via IRD and of 3,3',5'-triiodo-L-thyronine sulfate via ORD. The sequence is that of Type I iodothyronine deiodinase (dio1) from Xenopus laevis (African clawed frog).